Here is a 462-residue protein sequence, read N- to C-terminus: UDP-N-acetylmuramoylalanine--D-glutamate ligase (462 aa).

An ATP-binding site is contributed by 118–124 (GTNGKST).

The protein belongs to the MurCDEF family.

The protein localises to the cytoplasm. The enzyme catalyses UDP-N-acetyl-alpha-D-muramoyl-L-alanine + D-glutamate + ATP = UDP-N-acetyl-alpha-D-muramoyl-L-alanyl-D-glutamate + ADP + phosphate + H(+). The protein operates within cell wall biogenesis; peptidoglycan biosynthesis. Cell wall formation. Catalyzes the addition of glutamate to the nucleotide precursor UDP-N-acetylmuramoyl-L-alanine (UMA). This Anaeromyxobacter dehalogenans (strain 2CP-C) protein is UDP-N-acetylmuramoylalanine--D-glutamate ligase.